The following is a 90-amino-acid chain: Protein Z600 (90 aa).

Thr22 and Thr48 each carry phosphothreonine. The interval 46 to 65 is disordered; it reads PATPSSSGHGKFQTELKKRR.

Component of the Frs-CycA-Cdk1 complex composed of Z600, CycA and Cdk1. Interacts preferentially with CycA (via C-terminus) but is also able to interact (via C-terminus) with CycE (via C-terminus).

It is found in the nucleus. Its function is as follows. Cell cycle regulator that is involved in modulating and adjusting cell proliferation according to the requirements of the developmental program. Interacts with mitotic Cdk1-cyclin complexes to inhibit mitotic entry at the G2/M transition. Likely to function by binding to the hydrophobic patch of cyclins to interfere with the interaction between the complex and certain Cdk1 substrates. At the mid-blastula transition, involved in the cell cycle arrest in G2 of cycle 14 by delaying mitosis and thus reducing cell proliferation allowing cell fate specification and morphogenesis to take place. Acts downstream or in parallel to the checkpoint regulator grp which is also required for the cell cycle pause at cycle 14. During gastrulation, delays mitosis in the ventral region of the embryonic mesoderm thus allowing invagination to be completed before cell division takes place. The chain is Protein Z600 from Drosophila melanogaster (Fruit fly).